The primary structure comprises 493 residues: 6-aminohexanoate-cyclic-dimer hydrolase (493 aa).

Residues K72 and S150 each act as charge relay system in the active site. The active-site Acyl-ester intermediate is the S174.

This sequence belongs to the amidase family. As to quaternary structure, homodimer.

The enzyme catalyses 1,8-diazacyclotetradecane-2,9-dione + H2O = N-(6-aminohexanoyl)-6-aminohexanoate. It functions in the pathway xenobiotic degradation; nylon-6 oligomer degradation. With respect to regulation, strongly inhibited by 1 uM diisopropylphosphofluoridate and 10 uM p-chloromercuribenzoate but scarcely inhibited by 100 mM EDTA in vitro. Specifically catalyzes the hydrolysis of 6-aminohexanoic acid cyclic dimer (1,8-diazacyclotetradecane-2,9-dione) to form the linear dimer 6-aminohexanoyl-6-aminohexanoic acid. Is inactive on 6-aminohexanoic acid oligomers (degree of polymerization 2 to 6), various other cyclic amides, cyclic diamides, linear amides, oligopeptides, and casein. Allows the bacterium to grow on a medium containing 6-aminohexanoic acid cyclic dimer as the sole carbon and nitrogen sources. The protein is 6-aminohexanoate-cyclic-dimer hydrolase (nylA) of Paenarthrobacter ureafaciens.